The chain runs to 307 residues: UDP-3-O-acyl-N-acetylglucosamine deacetylase (307 aa).

The Zn(2+) site is built by His-78, His-237, and Asp-241. His-264 (proton donor) is an active-site residue.

This sequence belongs to the LpxC family. Zn(2+) serves as cofactor.

The catalysed reaction is a UDP-3-O-[(3R)-3-hydroxyacyl]-N-acetyl-alpha-D-glucosamine + H2O = a UDP-3-O-[(3R)-3-hydroxyacyl]-alpha-D-glucosamine + acetate. Its pathway is glycolipid biosynthesis; lipid IV(A) biosynthesis; lipid IV(A) from (3R)-3-hydroxytetradecanoyl-[acyl-carrier-protein] and UDP-N-acetyl-alpha-D-glucosamine: step 2/6. Its function is as follows. Catalyzes the hydrolysis of UDP-3-O-myristoyl-N-acetylglucosamine to form UDP-3-O-myristoylglucosamine and acetate, the committed step in lipid A biosynthesis. The polypeptide is UDP-3-O-acyl-N-acetylglucosamine deacetylase (Azoarcus sp. (strain BH72)).